Consider the following 847-residue polypeptide: Pollen-specific leucine-rich repeat extensin-like protein 2 (847 aa).

Residues 1 to 20 (MERPFGCFFILLLISYTVVA) form the signal peptide. LRR repeat units lie at residues 45–71 (INKV…AWKK), 106–130 (LTVV…LGLM), 131–153 (TDLA…SLSK), 155–178 (ALMY…SLSW), 179–202 (PSLK…IFDK), 204–224 (LDAI…TIGK), 226–248 (KASV…IGNM), and 249–273 (KNLN…GLLN). N-linked (GlcNAc...) asparagine glycans are attached at residues Asn-260 and Asn-274. 2 LRR repeats span residues 296–319 (LASV…KFCK) and 321–343 (PNLD…CVPG). The disordered stretch occupies residues 381-847 (KDKCSGGSNG…SPPPPMFQGY (467 aa)). The span at 438 to 484 (PKHESPKPEEPENKHELPKQKESPKPQPSKPEDSPKPEQPKPEESPK) shows a compositional bias: basic and acidic residues. 2 stretches are compositionally biased toward pro residues: residues 485-499 (PEQP…PVSP) and 533-642 (VPPP…PPPT). A contains the Ser-Pro(4) repeats region spans residues 522 to 847 (SPPPPKVEDT…SPPPPMFQGY (326 aa)). Polar residues-rich tracts occupy residues 667 to 682 (QVPT…QILS), 688 to 720 (TPVQ…SPVQ), and 726 to 752 (QAPT…SQAP). Low complexity-rich tracts occupy residues 768–783 (PVQS…SSPE) and 797–811 (NPSS…TDTS). The segment covering 838–847 (SPPPPMFQGY) has biased composition (pro residues).

Post-translationally, hydroxylated on proline residues in the S-P-P-P-P repeat. O-glycosylated on hydroxyprolines. Expressed in flowers, stamen, pollen, and pollinated carpels (at protein level).

It is found in the secreted. It localises to the cell wall. In terms of biological role, modulates cell morphogenesis by regulating cell wall formation and assembly, and/or growth polarization. The protein is Pollen-specific leucine-rich repeat extensin-like protein 2 (PEX2) of Arabidopsis thaliana (Mouse-ear cress).